Reading from the N-terminus, the 285-residue chain is Bifunctional protein FolD (285 aa).

NADP(+) contacts are provided by residues glycine 166 to serine 168 and isoleucine 232.

The protein belongs to the tetrahydrofolate dehydrogenase/cyclohydrolase family. As to quaternary structure, homodimer.

It catalyses the reaction (6R)-5,10-methylene-5,6,7,8-tetrahydrofolate + NADP(+) = (6R)-5,10-methenyltetrahydrofolate + NADPH. The catalysed reaction is (6R)-5,10-methenyltetrahydrofolate + H2O = (6R)-10-formyltetrahydrofolate + H(+). The protein operates within one-carbon metabolism; tetrahydrofolate interconversion. In terms of biological role, catalyzes the oxidation of 5,10-methylenetetrahydrofolate to 5,10-methenyltetrahydrofolate and then the hydrolysis of 5,10-methenyltetrahydrofolate to 10-formyltetrahydrofolate. This Pseudoalteromonas atlantica (strain T6c / ATCC BAA-1087) protein is Bifunctional protein FolD.